We begin with the raw amino-acid sequence, 463 residues long: Glutamate--tRNA ligase 2 (463 aa).

The short motif at 11-21 (PSPTGYLHIGG) is the 'HIGH' region element. The short motif at 240–244 (KLSKR) is the 'KMSKS' region element. Lys243 is a binding site for ATP.

The protein belongs to the class-I aminoacyl-tRNA synthetase family. Glutamate--tRNA ligase type 1 subfamily. Monomer.

It localises to the cytoplasm. It catalyses the reaction tRNA(Glu) + L-glutamate + ATP = L-glutamyl-tRNA(Glu) + AMP + diphosphate. In terms of biological role, catalyzes the attachment of glutamate to tRNA(Glu) in a two-step reaction: glutamate is first activated by ATP to form Glu-AMP and then transferred to the acceptor end of tRNA(Glu). This Campylobacter jejuni subsp. jejuni serotype O:6 (strain 81116 / NCTC 11828) protein is Glutamate--tRNA ligase 2.